A 153-amino-acid polypeptide reads, in one-letter code: Ribonuclease 2 (153 aa).

This sequence belongs to the BetVI family.

The protein resides in the cytoplasm. Its function is as follows. Catalyzes the two-stage endonucleolytic cleavage to 3'-phosphomononucleotides and 3'-phosphooligonucleotides with 2',3'-cyclic phosphate intermediates. This Panax ginseng (Korean ginseng) protein is Ribonuclease 2.